A 346-amino-acid polypeptide reads, in one-letter code: Small ribosomal subunit biogenesis GTPase RsgA 2 (346 aa).

Positions 93–248 (EEQLIAANFD…VIDTPGMREF (156 aa)) constitute a CP-type G domain. GTP is bound by residues 138-141 (TKAD) and 190-198 (GSSGVGKSS). Zn(2+) contacts are provided by cysteine 271, cysteine 276, histidine 278, and cysteine 284.

This sequence belongs to the TRAFAC class YlqF/YawG GTPase family. RsgA subfamily. In terms of assembly, monomer. Associates with 30S ribosomal subunit, binds 16S rRNA. Zn(2+) serves as cofactor.

The protein localises to the cytoplasm. Functionally, one of several proteins that assist in the late maturation steps of the functional core of the 30S ribosomal subunit. Helps release RbfA from mature subunits. May play a role in the assembly of ribosomal proteins into the subunit. Circularly permuted GTPase that catalyzes slow GTP hydrolysis, GTPase activity is stimulated by the 30S ribosomal subunit. The sequence is that of Small ribosomal subunit biogenesis GTPase RsgA 2 from Listeria monocytogenes serotype 4b (strain F2365).